Reading from the N-terminus, the 320-residue chain is Undecaprenyl-diphosphatase (320 aa).

The next 8 helical transmembrane spans lie at 9–29, 82–102, 130–150, 161–181, 191–211, 236–256, 265–285, and 296–316; these read FVLV…LEVF, GVAF…WYFW, LGII…KKLI, LGAI…GEKL, LTMQ…IPGV, FLLG…DVFA, LPLI…IAGL, and VFIW…SAGI.

The protein belongs to the UppP family.

The protein resides in the cell inner membrane. The enzyme catalyses di-trans,octa-cis-undecaprenyl diphosphate + H2O = di-trans,octa-cis-undecaprenyl phosphate + phosphate + H(+). Functionally, catalyzes the dephosphorylation of undecaprenyl diphosphate (UPP). Confers resistance to bacitracin. The polypeptide is Undecaprenyl-diphosphatase (Trichormus variabilis (strain ATCC 29413 / PCC 7937) (Anabaena variabilis)).